Here is a 119-residue protein sequence, read N- to C-terminus: Membrane-anchored ubiquitin-fold protein 3 (119 aa).

Positions 8-76 constitute a Ubiquitin-like domain; it reads IEVKFRLFDG…NNRTLAESRV (69 aa). A Cysteine methyl ester modification is found at Cys-116. A lipid anchor (S-geranylgeranyl cysteine) is attached at Cys-116. A propeptide spans 117-119 (removed in mature form); it reads TIL.

Its subcellular location is the cell membrane. May serve as docking site to facilitate the association of other proteins to the plasma membrane. This is Membrane-anchored ubiquitin-fold protein 3 (MUB3) from Oryza sativa subsp. japonica (Rice).